The sequence spans 310 residues: Leucine carboxyl methyltransferase 1 (310 aa).

Residues Arg-50, Gly-75, Asp-100, 145–146 (DI), and Glu-169 each bind S-adenosyl-L-methionine.

The protein belongs to the methyltransferase superfamily. LCMT family.

The catalysed reaction is [phosphatase 2A protein]-C-terminal L-leucine + S-adenosyl-L-methionine = [phosphatase 2A protein]-C-terminal L-leucine methyl ester + S-adenosyl-L-homocysteine. Its function is as follows. Methylates the carboxyl group of the C-terminal leucine residue of protein phosphatase 2A catalytic subunits to form alpha-leucine ester residues. This is Leucine carboxyl methyltransferase 1 (ppm1) from Schizosaccharomyces pombe (strain 972 / ATCC 24843) (Fission yeast).